The following is a 614-amino-acid chain: Threonine--tRNA ligase (614 aa).

The editing domain stretch occupies residues 1 to 141 (MRLLLIHSDY…LSKTIVPGEE (141 aa)). A catalytic region spans residues 198 to 490 (AHVDLMRSKE…ISTQKVPALP (293 aa)). Zn(2+) contacts are provided by Cys290, His342, and His463.

The protein belongs to the class-II aminoacyl-tRNA synthetase family. Homodimer. Zn(2+) serves as cofactor.

It localises to the cytoplasm. The catalysed reaction is tRNA(Thr) + L-threonine + ATP = L-threonyl-tRNA(Thr) + AMP + diphosphate + H(+). In terms of biological role, catalyzes the attachment of threonine to tRNA(Thr) in a two-step reaction: L-threonine is first activated by ATP to form Thr-AMP and then transferred to the acceptor end of tRNA(Thr). Also edits incorrectly charged L-seryl-tRNA(Thr). The protein is Threonine--tRNA ligase of Methanoregula boonei (strain DSM 21154 / JCM 14090 / 6A8).